Reading from the N-terminus, the 314-residue chain is Acetaldehyde dehydrogenase 1 (314 aa).

S11–I14 serves as a coordination point for NAD(+). The Acyl-thioester intermediate role is filled by C129. Residues S160–N168 and N292 contribute to the NAD(+) site.

Belongs to the acetaldehyde dehydrogenase family.

The catalysed reaction is acetaldehyde + NAD(+) + CoA = acetyl-CoA + NADH + H(+). The chain is Acetaldehyde dehydrogenase 1 from Nocardioides sp. (strain ATCC BAA-499 / JS614).